The primary structure comprises 289 residues: Pantothenate synthetase (289 aa).

30–37 contributes to the ATP binding site; the sequence is MGNLHEGH. His-37 (proton donor) is an active-site residue. A (R)-pantoate-binding site is contributed by Gln-61. Gln-61 provides a ligand contact to beta-alanine. 149 to 152 is an ATP binding site; that stretch reads GEKD. Gln-155 serves as a coordination point for (R)-pantoate. 186 to 189 provides a ligand contact to ATP; it reads MSSR.

Belongs to the pantothenate synthetase family. Homodimer.

The protein localises to the cytoplasm. The enzyme catalyses (R)-pantoate + beta-alanine + ATP = (R)-pantothenate + AMP + diphosphate + H(+). The protein operates within cofactor biosynthesis; (R)-pantothenate biosynthesis; (R)-pantothenate from (R)-pantoate and beta-alanine: step 1/1. Its function is as follows. Catalyzes the condensation of pantoate with beta-alanine in an ATP-dependent reaction via a pantoyl-adenylate intermediate. The sequence is that of Pantothenate synthetase from Psychromonas ingrahamii (strain DSM 17664 / CCUG 51855 / 37).